Here is a 640-residue protein sequence, read N- to C-terminus: 5-aminolevulinate synthase, non-specific, mitochondrial (640 aa).

The N-terminal 56 residues, 1 to 56, are a transit peptide targeting the mitochondrion; the sequence is METVVRSCPFLSRVPQAFLQKAGKSLLFYAQNCPKMMEVGAKPAPRALSTAAVHYQ. Disordered regions lie at residues 60 to 103 and 143 to 163; these read ETPP…TSQG and EVAETSGGPSVVSVKTDGGDP. Residues 75 to 92 are compositionally biased toward polar residues; the sequence is VQQTPDGSQQSPDGTQLP. The substrate site is built by R217, S334, and K353. Pyridoxal 5'-phosphate-binding residues include S386, H414, and T442. K445 is an active-site residue. K445 carries the post-translational modification N6-(pyridoxal phosphate)lysine. Residues T474 and T475 each contribute to the pyridoxal 5'-phosphate site. T562 contributes to the substrate binding site. P576 bears the Hydroxyproline mark.

This sequence belongs to the class-II pyridoxal-phosphate-dependent aminotransferase family. Homodimer. Interacts (hydroxylated form) with VHL. Requires pyridoxal 5'-phosphate as cofactor. In terms of processing, in normoxia, is hydroxylated at Pro-576, promoting interaction with VHL, initiating ubiquitination and subsequent degradation via the proteasome. Ubiquitinated; in normoxia following hydroxylation and interaction with VHL, leading to its subsequent degradation via the proteasome.

It localises to the mitochondrion inner membrane. It carries out the reaction succinyl-CoA + glycine + H(+) = 5-aminolevulinate + CO2 + CoA. The protein operates within porphyrin-containing compound metabolism; protoporphyrin-IX biosynthesis; 5-aminolevulinate from glycine: step 1/1. In terms of biological role, catalyzes the pyridoxal 5'-phosphate (PLP)-dependent condensation of succinyl-CoA and glycine to form aminolevulinic acid (ALA), with CoA and CO2 as by-products. This chain is 5-aminolevulinate synthase, non-specific, mitochondrial (ALAS1), found in Pongo abelii (Sumatran orangutan).